We begin with the raw amino-acid sequence, 404 residues long: Chorismate synthase (404 aa).

R47 provides a ligand contact to NADP(+). FMN contacts are provided by residues 156 to 158 (RSS), 281 to 282 (NA), G321, 336 to 340 (KPTST), and R363.

The protein belongs to the chorismate synthase family. Homotetramer. The cofactor is FMNH2.

The enzyme catalyses 5-O-(1-carboxyvinyl)-3-phosphoshikimate = chorismate + phosphate. It participates in metabolic intermediate biosynthesis; chorismate biosynthesis; chorismate from D-erythrose 4-phosphate and phosphoenolpyruvate: step 7/7. Catalyzes the anti-1,4-elimination of the C-3 phosphate and the C-6 proR hydrogen from 5-enolpyruvylshikimate-3-phosphate (EPSP) to yield chorismate, which is the branch point compound that serves as the starting substrate for the three terminal pathways of aromatic amino acid biosynthesis. This reaction introduces a second double bond into the aromatic ring system. This chain is Chorismate synthase, found in Rhodopirellula baltica (strain DSM 10527 / NCIMB 13988 / SH1).